A 131-amino-acid polypeptide reads, in one-letter code: Small ribosomal subunit protein uS8 (131 aa).

The protein belongs to the universal ribosomal protein uS8 family. As to quaternary structure, part of the 30S ribosomal subunit. Contacts proteins S5 and S12.

Its function is as follows. One of the primary rRNA binding proteins, it binds directly to 16S rRNA central domain where it helps coordinate assembly of the platform of the 30S subunit. The protein is Small ribosomal subunit protein uS8 of Polaromonas sp. (strain JS666 / ATCC BAA-500).